We begin with the raw amino-acid sequence, 307 residues long: Malonyl-[acyl-carrier protein] O-methyltransferase (307 aa).

The protein belongs to the methyltransferase superfamily.

The catalysed reaction is malonyl-[ACP] + S-adenosyl-L-methionine = malonyl-[ACP] methyl ester + S-adenosyl-L-homocysteine. The protein operates within cofactor biosynthesis; biotin biosynthesis. Functionally, converts the free carboxyl group of a malonyl-thioester to its methyl ester by transfer of a methyl group from S-adenosyl-L-methionine (SAM). It allows to synthesize pimeloyl-ACP via the fatty acid synthetic pathway. In Nitrosospira multiformis (strain ATCC 25196 / NCIMB 11849 / C 71), this protein is Malonyl-[acyl-carrier protein] O-methyltransferase.